The sequence spans 346 residues: C5a anaphylatoxin chemotactic receptor 1 (346 aa).

The Extracellular segment spans residues 1-33; the sequence is MDDNNSDWTSYDFGNDTIPSPNEISLSHIGTRH. Asparagine 4 and asparagine 15 each carry an N-linked (GlcNAc...) asparagine glycan. A helical transmembrane segment spans residues 34–60; that stretch reads WITLVCYGIVFLLGVPGNALVVWVTGF. The Cytoplasmic segment spans residues 61-65; the sequence is RMPNS. The helical transmembrane segment at 66-89 threads the bilayer; the sequence is VNAQWFLNLAIADLLCCLSLPILM. The Extracellular segment spans residues 90–106; the sequence is VPLAQDQHWPFGALACK. Cysteines 105 and 183 form a disulfide. Residues 107–128 form a helical membrane-spanning segment; it reads LFSGIFYMMMYCSVLLLVVISL. At 129 to 149 the chain is on the cytoplasmic side; that stretch reads DRFLLVTKPVWCQNNRQPRQA. Residues 150–170 traverse the membrane as a helical segment; sequence RILCFIIWILGLLGSSPYFAH. At 171-194 the chain is on the extracellular side; that stretch reads MEIQHHSETKTVCTGSYSSLGHAW. Residues 195–220 form a helical membrane-spanning segment; the sequence is AITIIRSFLFFLLPFLIICISHWKVY. Over 221–238 the chain is Cytoplasmic; that stretch reads HMTSSGRRQRDKSSRTLR. Residues 239–261 form a helical membrane-spanning segment; it reads VILALVLGFFLCWTPLHIVDLLI. Residues 262-279 lie on the Extracellular side of the membrane; it reads LVSDQPSERFEVNLNLAH. The chain crosses the membrane as a helical span at residues 280 to 300; that stretch reads VLTLCLAYINSCLNPLLYVCL. Over 301–346 the chain is Cytoplasmic; the sequence is GRGFKENLISSLRSVLHFASEAPTHGPSMTTNSKSTTDGVFREKPV. The interval 323-346 is disordered; it reads PTHGPSMTTNSKSTTDGVFREKPV. The segment covering 327 to 338 has biased composition (polar residues); that stretch reads PSMTTNSKSTTD.

Belongs to the G-protein coupled receptor 1 family.

The protein resides in the cell membrane. Its function is as follows. Receptor for the chemotactic and inflammatory peptide anaphylatoxin C5a. This receptor stimulates chemotaxis, granule enzyme release and superoxide anion production. The polypeptide is C5a anaphylatoxin chemotactic receptor 1 (c5ar1) (Danio rerio (Zebrafish)).